A 383-amino-acid polypeptide reads, in one-letter code: Adaptive-response sensory kinase SasA (383 aa).

The Histidine kinase domain occupies methionine 152–glutamine 365. Residue histidine 155 is modified to Phosphohistidine; by autocatalysis.

Homooligomerizes. Interacts with KaiC. Participates in the KaiABC clock complex, whose core is composed of a KaiC homohexamer, 6 KaiB and up to 6 KaiA dimers. SasA and KaiB(fs) compete to bind to KaiC.

It carries out the reaction ATP + protein L-histidine = ADP + protein N-phospho-L-histidine.. Its function is as follows. Member of the two-component regulatory system SasA/RpaA involved in genome-wide circadian gene expression. One of several clock output pathways. Participates in the Kai clock protein complex, the main circadian regulator in cyanobacteria, via its interaction with KaiC. KaiC enhances the autophosphorylation activity of SasA, which then transfers its phosphate group to RpaA to activate it. In addition to its output function, recruits fold-shifted KaiB (KaiB(fs)) to KaiC to cooperatively form the KaiB(6):KaiC(6) complex (independent of SasA kinase activity). Required for robustness of the circadian rhythm of gene expression and is involved in clock output, also required for adaptation to light/dark cycles. This is Adaptive-response sensory kinase SasA from Synechococcus sp. (strain CC9902).